A 572-amino-acid polypeptide reads, in one-letter code: Proline--tRNA ligase (572 aa).

Belongs to the class-II aminoacyl-tRNA synthetase family. ProS type 1 subfamily. As to quaternary structure, homodimer.

It is found in the cytoplasm. The enzyme catalyses tRNA(Pro) + L-proline + ATP = L-prolyl-tRNA(Pro) + AMP + diphosphate. Functionally, catalyzes the attachment of proline to tRNA(Pro) in a two-step reaction: proline is first activated by ATP to form Pro-AMP and then transferred to the acceptor end of tRNA(Pro). As ProRS can inadvertently accommodate and process non-cognate amino acids such as alanine and cysteine, to avoid such errors it has two additional distinct editing activities against alanine. One activity is designated as 'pretransfer' editing and involves the tRNA(Pro)-independent hydrolysis of activated Ala-AMP. The other activity is designated 'posttransfer' editing and involves deacylation of mischarged Ala-tRNA(Pro). The misacylated Cys-tRNA(Pro) is not edited by ProRS. The protein is Proline--tRNA ligase of Salmonella choleraesuis (strain SC-B67).